A 188-amino-acid chain; its full sequence is Elongation factor P (188 aa).

The protein belongs to the elongation factor P family.

It is found in the cytoplasm. It participates in protein biosynthesis; polypeptide chain elongation. Involved in peptide bond synthesis. Stimulates efficient translation and peptide-bond synthesis on native or reconstituted 70S ribosomes in vitro. Probably functions indirectly by altering the affinity of the ribosome for aminoacyl-tRNA, thus increasing their reactivity as acceptors for peptidyl transferase. The protein is Elongation factor P (efp) of Rickettsia prowazekii (strain Madrid E).